Here is a 560-residue protein sequence, read N- to C-terminus: MKDMSIPLLAAVSSSTEETVRPIADFHPTLWGNHFLKSAADVETIDAATQEQHAALKQEVRRMITTTANKLAQKLHMIDAVQRLGVAYHFEKEIEDELGKVSHDLDSDDLYVVSLRFRLFRQQGVKISCDVFDKFKDDEGKFKESLINDIRGMLSLYEAAYLAIRGEDILDEAIVFTTTHLKSVISISDHSHANSNLAEQIRHSLQIPLRKAAARLEARYFLDIYSRDDLHDETLLKFAKLDFNILQAAHQKEASIMTRWWNDLGFPKKVPYARDRIIETYIWMLLGVSYEPNLAFGRIFASKVVCMITTIDDTFDAYGTFEELTLFTEAVTRWDIGLIDTLPEYMKFIVKALLDIYREAEEELAKEGRSYGIPYAKQMMQELIILYFTEAKWLYKGYVPTFDEYKSVALRSIGLRTLAVASFVDLGDFIATKDNFECILKNAKSLKATETIGRLMDDIAGYKFEQKRGHNPSAVECYKNQHGVSEEEAVKELLLEVANSWKDINEELLNPTTVPLPMLQRLLYFARSGHFIYDDGHDRYTHSLMMKRQVALLLTEPLAI.

Mg(2+) is bound by residues aspartate 312, aspartate 316, aspartate 457, and glutamate 465. Positions 312-316 match the DDXXD motif motif; that stretch reads DDTFD.

The protein belongs to the terpene synthase family. It depends on Mg(2+) as a cofactor. The cofactor is Co(2+). Mn(2+) serves as cofactor.

Its subcellular location is the cytoplasm. It catalyses the reaction (2E,6E)-farnesyl diphosphate = (E)-beta-farnesene + diphosphate. Its pathway is secondary metabolite biosynthesis; terpenoid biosynthesis. In terms of biological role, sesquiterpene cyclase catalyzing the production of beta-farnesene from farnesyl diphosphate. In Citrus junos (Yuzu), this protein is (E)-beta-farnesene synthase.